A 527-amino-acid polypeptide reads, in one-letter code: MNLTLKESLVTRSRVFSPWTAFYFLQSLLINLGLGYPFSLLYTAAFTAILLLLWRTLPRVQKVLVGVSSLVAACYFPFAQAYGAPNFNTLLALHSTNMEESTEILTIFPWYSYLVGLFIFALGVIAIRRKKENEKARWNTFDSLCLVFSVATFFVAPVQNLAWGGVFKLKDTGYPVFRFAKDVIVNNNEVIEEQERMAKLSGMKDTWTVTAVKPKYQTYVVVIGESARRDALGAFGGHWDNTPFASSVNGLIFADYIAASGSTQKSLGLTLNRVVDGKPQFQDNFVTLANRAGFQTWWFSNQGQIGEYDTAIASIAKRADEVYFLKEGNFEADKNTKDEALLDMTAQVLAQEHSQPQLIVLHLMGSHPQACDRTQGKYETFVQSKETSCYLYTMTQTDDLLRKLYDQLRNSGSSFSLVYFSDHGLAFKERGKDVQYLAHDDKYQQNFQVPFMVISSDDKAHRVIKARRSANDFLGFFSQWTGIKAKEINIKYPFISEKKAGPIYITNFQLQKVDYNHLGTDIFDPKP.

The Periplasmic portion of the chain corresponds to 1–33; that stretch reads MNLTLKESLVTRSRVFSPWTAFYFLQSLLINLG. A helical transmembrane segment spans residues 34-54; it reads LGYPFSLLYTAAFTAILLLLW. Topologically, residues 55-62 are cytoplasmic; the sequence is RTLPRVQK. A helical transmembrane segment spans residues 63 to 83; it reads VLVGVSSLVAACYFPFAQAYG. Over 84 to 106 the chain is Periplasmic; it reads APNFNTLLALHSTNMEESTEILT. Residues 107-127 traverse the membrane as a helical segment; that stretch reads IFPWYSYLVGLFIFALGVIAI. Over 128 to 146 the chain is Cytoplasmic; sequence RRKKENEKARWNTFDSLCL. A helical membrane pass occupies residues 147–167; that stretch reads VFSVATFFVAPVQNLAWGGVF. Over 168 to 527 the chain is Periplasmic; sequence KLKDTGYPVF…LGTDIFDPKP (360 aa).

It belongs to the phosphoethanolamine transferase family.

It localises to the cell inner membrane. The protein operates within glycan metabolism; osmoregulated periplasmic glucan (OPG) biosynthesis. In terms of biological role, catalyzes the addition of a phosphoethanolamine moiety to the osmoregulated periplasmic glucan (OPG) backbone. The polypeptide is Phosphoethanolamine transferase OpgE (opgE) (Escherichia coli (strain K12)).